The sequence spans 231 residues: Cytidylate kinase (231 aa).

11 to 19 (GHSSCGKST) provides a ligand contact to ATP.

Belongs to the cytidylate kinase family. Type 1 subfamily.

It localises to the cytoplasm. It carries out the reaction CMP + ATP = CDP + ADP. It catalyses the reaction dCMP + ATP = dCDP + ADP. In Porphyromonas gingivalis (strain ATCC BAA-308 / W83), this protein is Cytidylate kinase.